The sequence spans 390 residues: Phosphopentomutase (390 aa).

Residues Asp-9, Asp-283, His-288, Asp-324, His-325, and His-336 each contribute to the Mn(2+) site.

It belongs to the phosphopentomutase family. Requires Mn(2+) as cofactor.

The protein localises to the cytoplasm. The enzyme catalyses 2-deoxy-alpha-D-ribose 1-phosphate = 2-deoxy-D-ribose 5-phosphate. It carries out the reaction alpha-D-ribose 1-phosphate = D-ribose 5-phosphate. Its pathway is carbohydrate degradation; 2-deoxy-D-ribose 1-phosphate degradation; D-glyceraldehyde 3-phosphate and acetaldehyde from 2-deoxy-alpha-D-ribose 1-phosphate: step 1/2. Isomerase that catalyzes the conversion of deoxy-ribose 1-phosphate (dRib-1-P) and ribose 1-phosphate (Rib-1-P) to deoxy-ribose 5-phosphate (dRib-5-P) and ribose 5-phosphate (Rib-5-P), respectively. This is Phosphopentomutase from Thermotoga maritima (strain ATCC 43589 / DSM 3109 / JCM 10099 / NBRC 100826 / MSB8).